The sequence spans 129 residues: Phosphoribosyl-AMP cyclohydrolase (129 aa).

Residue D76 participates in Mg(2+) binding. C77 contributes to the Zn(2+) binding site. Residues D78 and D80 each coordinate Mg(2+). Residues C97 and C104 each contribute to the Zn(2+) site.

It belongs to the PRA-CH family. Homodimer. It depends on Mg(2+) as a cofactor. Requires Zn(2+) as cofactor.

The protein resides in the cytoplasm. The catalysed reaction is 1-(5-phospho-beta-D-ribosyl)-5'-AMP + H2O = 1-(5-phospho-beta-D-ribosyl)-5-[(5-phospho-beta-D-ribosylamino)methylideneamino]imidazole-4-carboxamide. Its pathway is amino-acid biosynthesis; L-histidine biosynthesis; L-histidine from 5-phospho-alpha-D-ribose 1-diphosphate: step 3/9. Its function is as follows. Catalyzes the hydrolysis of the adenine ring of phosphoribosyl-AMP. The protein is Phosphoribosyl-AMP cyclohydrolase of Polaromonas naphthalenivorans (strain CJ2).